A 1077-amino-acid polypeptide reads, in one-letter code: Disheveled-associated activator of morphogenesis 1 (1077 aa).

The residue at position 34 (serine 34) is a Phosphoserine. Residues 45 to 420 form the GBD/FH3 domain; sequence LPMPPVEELD…QIVIQNDKGQ (376 aa). Residues 437 to 526 adopt a coiled-coil conformation; that stretch reads RMLVNENEVK…ELNRRAVCAA (90 aa). Disordered stretches follow at residues 457–478 and 526–596; these read KEHN…AKTQ and AVPG…PVSL. The FH1 domain maps to 528 to 599; it reads PGGPSPGAPG…PGAPVSLTLK (72 aa). 2 stretches are compositionally biased toward pro residues: residues 530 to 539 and 549 to 592; these read GPSPGAPGGP and LPPP…PPGA. The FH2 domain occupies 600-1008; sequence KKNIPQPTNA…EERRARLEAQ (409 aa). An actin-binding region spans residues 693–702; that stretch reads QNCNILLSRL. A compositionally biased stretch (basic and acidic residues) spans 1007–1026; it reads AQLKEQRERERKVRKAKESS. Disordered stretches follow at residues 1007–1033 and 1056–1077; these read AQLK…GEFD and RKRI…KLNF. A phosphoserine mark is found at serine 1026 and serine 1029. One can recognise a DAD domain in the interval 1026–1057; sequence SEESGEFDDLVSALRSGEVFDKDLSKLKRNRK. Positions 1066 to 1077 are enriched in basic and acidic residues; the sequence is SSRERPITKLNF.

The protein belongs to the formin homology family. Interacts with CIP4, FNBP1 and FNBP1L. Interacts with the SH3 domains of Abl, BTK, endophilin, spectrin and SRC. Binds specifically to GTP-bound CDC42 and RHOA. Interacts with INTU; INTU mediates the indirect interaction between DAAM1 and NPHP4. Interacts (via coiled coil domain) with KANK1 (via coiled coil domain). In terms of tissue distribution, in early embryogenesis, expressed in embryonic and extraembryonic ectoderm. In later stages of gastrulation, expressed also in somites and ribs and posterior vertebrae of developing skeletal system. During organogenesis, expressed in CNS, PNS, stomach, liver and limb bud.

The protein resides in the cytoplasm. Its subcellular location is the cytoskeleton. The protein localises to the cilium basal body. Binds to disheveled (Dvl) and Rho, and mediates Wnt-induced Dvl-Rho complex formation. May play a role as a scaffolding protein to recruit Rho-GDP and Rho-GEF, thereby enhancing Rho-GTP formation. Can direct nucleation and elongation of new actin filaments. Involved in building functional cilia. Involved in the organization of the subapical actin network in multiciliated epithelial cells. Together with DAAM2, required for myocardial maturation and sarcomere assembly. During cell division, may regulate RHOA activation that signals spindle orientation and chromosomal segregation. The sequence is that of Disheveled-associated activator of morphogenesis 1 (Daam1) from Mus musculus (Mouse).